Here is a 122-residue protein sequence, read N- to C-terminus: Large ribosomal subunit protein uL14c (122 aa).

The protein belongs to the universal ribosomal protein uL14 family. Part of the 50S ribosomal subunit.

The protein localises to the plastid. It is found in the chloroplast. In terms of biological role, binds to 23S rRNA. This chain is Large ribosomal subunit protein uL14c, found in Platanus occidentalis (Sycamore).